The sequence spans 208 residues: MARYIGPTCKLARREGADLSLKSPARALDSKCKLEQKPGQHGAARKGKLSDYATQLREKQKVKRIYGLLERQFRNYYKKASTKKGNTGENLLQLLETRLDNVCYRMGFAVTRPAARQLVSHRGVLVNGKSVNLASYQIKAGDAITLSEKAQKQLRVQEALTVAEQHDMTPSWVEVDSKKFSGVFKAVPDRADLPSDINEALIVELYSK.

In terms of domain architecture, S4 RNA-binding spans 97-160; the sequence is TRLDNVCYRM…QKQLRVQEAL (64 aa).

This sequence belongs to the universal ribosomal protein uS4 family. In terms of assembly, part of the 30S ribosomal subunit. Contacts protein S5. The interaction surface between S4 and S5 is involved in control of translational fidelity.

Its function is as follows. One of the primary rRNA binding proteins, it binds directly to 16S rRNA where it nucleates assembly of the body of the 30S subunit. With S5 and S12 plays an important role in translational accuracy. This chain is Small ribosomal subunit protein uS4, found in Xanthomonas axonopodis pv. citri (strain 306).